The primary structure comprises 173 residues: Dual-action ribosomal maturation protein DarP (173 aa).

This sequence belongs to the DarP family.

It localises to the cytoplasm. In terms of biological role, member of a network of 50S ribosomal subunit biogenesis factors which assembles along the 30S-50S interface, preventing incorrect 23S rRNA structures from forming. Promotes peptidyl transferase center (PTC) maturation. This is Dual-action ribosomal maturation protein DarP from Pseudomonas putida (strain W619).